The primary structure comprises 367 residues: Aspartate beta-hydroxylase domain-containing protein 1 (367 aa).

Positions 1–27 (MWRGSSAGGSQGAAMEGTGGELGGQGN) are disordered. At 1–49 (MWRGSSAGGSQGAAMEGTGGELGGQGNWGLEDAPGLLARASLPIMPAWP) the chain is on the cytoplasmic side. A helical membrane pass occupies residues 50–72 (LPLASSALTLLLGALTSLFLWYC). Residues 73-367 (YRLGSQDMQA…ALDFVFAPDP (295 aa)) are Lumenal-facing. Residues 88-122 (RAGAVGGRPGGCSEAGRPSPGRSGESGEGPRTEGL) form a disordered region. Ser-106 is modified (phosphoserine).

It belongs to the aspartyl/asparaginyl beta-hydroxylase family.

Its subcellular location is the membrane. This is Aspartate beta-hydroxylase domain-containing protein 1 (ASPHD1) from Bos taurus (Bovine).